Reading from the N-terminus, the 182-residue chain is 5-formyltetrahydrofolate cyclo-ligase (182 aa).

Positions 1–21 (MIRQRRRALTPEQQQEMGQQA) are disordered. The span at 11 to 21 (PEQQQEMGQQA) shows a compositional bias: polar residues. Residues 128 to 135 (GMGGGFYD) and D167 each bind ATP.

The protein belongs to the 5-formyltetrahydrofolate cyclo-ligase family.

The enzyme catalyses (6S)-5-formyl-5,6,7,8-tetrahydrofolate + ATP = (6R)-5,10-methenyltetrahydrofolate + ADP + phosphate. The protein operates within one-carbon metabolism; tetrahydrofolate interconversion. Involved in the removal of 5-formyltetrahydrofolate. In vitro, it is a potent inhibitor of various folate-dependent enzymes in the C1 metabolism network and in vivo it might function as a folate storage. 5-formyltetrahydrofolate is also used as an antifolate rescue agent in cancer chemotherapy. Catalyzes the irreversible ATP-dependent transformation of 5-formyltetrahydrofolate (5-CHO-THF) to form 5,10-methenyltetrahydrofolate (5,10-CH=THF). The reverse reaction is catalyzed by the serine hydroxymethyltransferase GlyA (SHMT). This is 5-formyltetrahydrofolate cyclo-ligase (ygfA) from Escherichia coli O157:H7.